The chain runs to 183 residues: Holliday junction branch migration complex subunit RuvA (183 aa).

A domain I region spans residues 1-63 (MIVGLIGVVE…EDANLLYGFL (63 aa)). The segment at 64 to 139 (EESEKILFER…FFIQDENRPA (76 aa)) is domain II. A139 is a region of interest (flexible linker). The segment at 139-183 (ARNEVFLALESLGFKSAEINKVLKTLKPNLSIEAAIKEALQQLRS) is domain III.

The protein belongs to the RuvA family. Homotetramer. Forms an RuvA(8)-RuvB(12)-Holliday junction (HJ) complex. HJ DNA is sandwiched between 2 RuvA tetramers; dsDNA enters through RuvA and exits via RuvB. An RuvB hexamer assembles on each DNA strand where it exits the tetramer. Each RuvB hexamer is contacted by two RuvA subunits (via domain III) on 2 adjacent RuvB subunits; this complex drives branch migration. In the full resolvosome a probable DNA-RuvA(4)-RuvB(12)-RuvC(2) complex forms which resolves the HJ.

Its subcellular location is the cytoplasm. The RuvA-RuvB-RuvC complex processes Holliday junction (HJ) DNA during genetic recombination and DNA repair, while the RuvA-RuvB complex plays an important role in the rescue of blocked DNA replication forks via replication fork reversal (RFR). RuvA specifically binds to HJ cruciform DNA, conferring on it an open structure. The RuvB hexamer acts as an ATP-dependent pump, pulling dsDNA into and through the RuvAB complex. HJ branch migration allows RuvC to scan DNA until it finds its consensus sequence, where it cleaves and resolves the cruciform DNA. In Helicobacter pylori (strain HPAG1), this protein is Holliday junction branch migration complex subunit RuvA.